The following is a 743-amino-acid chain: Envelope glycoprotein H (743 aa).

Residues 1 to 23 (MRPGLPPYLTVFTVYLLSHLPSQ) form the signal peptide. Topologically, residues 24–720 (RYGADAASEA…VVDATDSRLL (697 aa)) are virion surface. 4 N-linked (GlcNAc...) asparagine; by host glycosylation sites follow: Asn-56, Asn-63, Asn-68, and Asn-193. Positions 218–281 (YLMDELRYVK…QTEKHELLVL (64 aa)) are interaction with gL. N-linked (GlcNAc...) asparagine; by host glycans are attached at residues Asn-642 and Asn-701. The helical transmembrane segment at 721 to 741 (MMSVYALSAIIGIYLLYRMLK) threads the bilayer. Residues 742-743 (TC) lie on the Intravirion side of the membrane.

Belongs to the herpesviridae glycoprotein H family. Interacts with glycoprotein L (gL); this interaction is necessary for the correct processing and cell surface expression of gH. The heterodimer gH/gL seems to interact with gB trimers during fusion. Forms the envelope pentamer complex (PC) composed of gH, gL, UL128, UL130, and UL131A. The pentamer interacts with host NRP2. Forms the envelope trimer complex composed of gH, gL, and gO. The trimer interacts with host PDGFRA. The trimer also interacts with host EPHA2. Interacts with UL116. In terms of processing, N-glycosylated, O-glycosylated, and sialylated.

The protein resides in the virion membrane. Its subcellular location is the host cell membrane. It localises to the host endosome membrane. Functionally, the heterodimer glycoprotein H-glycoprotein L is required for the fusion of viral and plasma membranes leading to virus entry into the host cell. Following initial binding to host receptor, membrane fusion is mediated by the fusion machinery composed of gB and the heterodimer gH/gL. May also be involved in the fusion between the virion envelope and the outer nuclear membrane during virion morphogenesis. In human cytomegalovirus, forms two distincts complexes to mediate viral entry, a trimer and a pentamer at the surface of the virion envelope. The gH-gL-gO trimer is required for infection in fibroblasts by interacting with host PDGFRA, and in glioblastoma cells by interacting with host EPHA2. The gH-gL-UL128-UL130-UL131A pentamer is essential for viral entry in epithelial, endothelial and myeloid cells via interaction with host NRP2. The polypeptide is Envelope glycoprotein H (Human cytomegalovirus (strain AD169) (HHV-5)).